The sequence spans 564 residues: O-fucosyltransferase 5 (564 aa).

The segment at 1–28 is disordered; it reads MVRNSSDEEEDHRNLIPQNDTRDNDLNL. A helical; Signal-anchor for type II membrane protein membrane pass occupies residues 70 to 90; it reads YVVAAVSLTLFVGLLFLFTDT. Residues N129, N134, and N174 are each glycosylated (N-linked (GlcNAc...) asparagine). Substrate-binding positions include 413-415 and 529-530; these read HLR and TF.

Belongs to the glycosyltransferase GT106 family.

It is found in the membrane. The protein operates within glycan metabolism. This chain is O-fucosyltransferase 5, found in Arabidopsis thaliana (Mouse-ear cress).